A 352-amino-acid polypeptide reads, in one-letter code: Holliday junction branch migration complex subunit RuvB (352 aa).

Positions 4–185 (ADRLIAATGP…FGIVQRLEFY (182 aa)) are large ATPase domain (RuvB-L). Residues isoleucine 24, arginine 25, glycine 66, lysine 69, threonine 70, threonine 71, 132 to 134 (EDF), arginine 175, tyrosine 185, and arginine 222 contribute to the ATP site. Threonine 70 lines the Mg(2+) pocket. A small ATPAse domain (RuvB-S) region spans residues 186-256 (STADLATIVS…IADLALNLLD (71 aa)). The interval 259–352 (ERGFDHQDRR…VDEFLDAVDD (94 aa)) is head domain (RuvB-H). DNA contacts are provided by arginine 295, arginine 314, and arginine 319.

This sequence belongs to the RuvB family. In terms of assembly, homohexamer. Forms an RuvA(8)-RuvB(12)-Holliday junction (HJ) complex. HJ DNA is sandwiched between 2 RuvA tetramers; dsDNA enters through RuvA and exits via RuvB. An RuvB hexamer assembles on each DNA strand where it exits the tetramer. Each RuvB hexamer is contacted by two RuvA subunits (via domain III) on 2 adjacent RuvB subunits; this complex drives branch migration. In the full resolvosome a probable DNA-RuvA(4)-RuvB(12)-RuvC(2) complex forms which resolves the HJ.

It is found in the cytoplasm. It carries out the reaction ATP + H2O = ADP + phosphate + H(+). Functionally, the RuvA-RuvB-RuvC complex processes Holliday junction (HJ) DNA during genetic recombination and DNA repair, while the RuvA-RuvB complex plays an important role in the rescue of blocked DNA replication forks via replication fork reversal (RFR). RuvA specifically binds to HJ cruciform DNA, conferring on it an open structure. The RuvB hexamer acts as an ATP-dependent pump, pulling dsDNA into and through the RuvAB complex. RuvB forms 2 homohexamers on either side of HJ DNA bound by 1 or 2 RuvA tetramers; 4 subunits per hexamer contact DNA at a time. Coordinated motions by a converter formed by DNA-disengaged RuvB subunits stimulates ATP hydrolysis and nucleotide exchange. Immobilization of the converter enables RuvB to convert the ATP-contained energy into a lever motion, pulling 2 nucleotides of DNA out of the RuvA tetramer per ATP hydrolyzed, thus driving DNA branch migration. The RuvB motors rotate together with the DNA substrate, which together with the progressing nucleotide cycle form the mechanistic basis for DNA recombination by continuous HJ branch migration. Branch migration allows RuvC to scan DNA until it finds its consensus sequence, where it cleaves and resolves cruciform DNA. The polypeptide is Holliday junction branch migration complex subunit RuvB (Pseudomonas fluorescens (strain ATCC BAA-477 / NRRL B-23932 / Pf-5)).